Here is a 542-residue protein sequence, read N- to C-terminus: Putative serine/threonine-protein kinase L205 (542 aa).

A compositionally biased stretch (basic and acidic residues) spans 20–30; sequence FEKKSVGHNSD. The tract at residues 20 to 49 is disordered; sequence FEKKSVGHNSDDEYDDTVPYNEDDETSEEE. A compositionally biased stretch (acidic residues) spans 31–49; sequence DEYDDTVPYNEDDETSEEE. The region spanning 69 to 538 is the Protein kinase domain; the sequence is YLLLKKIGSG…ADELLKHPWL (470 aa). Residues 75–83 and Lys-98 each bind ATP; that span reads IGSGNNASV. Asp-201 serves as the catalytic Proton acceptor. The segment at 278-314 is disordered; the sequence is EELIPDDPDNNEKYYDSTDSEEYDYSDNSDYYDDDED. Positions 295–314 are enriched in acidic residues; it reads TDSEEYDYSDNSDYYDDDED.

Belongs to the protein kinase superfamily. Ser/Thr protein kinase family.

It catalyses the reaction L-seryl-[protein] + ATP = O-phospho-L-seryl-[protein] + ADP + H(+). The catalysed reaction is L-threonyl-[protein] + ATP = O-phospho-L-threonyl-[protein] + ADP + H(+). This is Putative serine/threonine-protein kinase L205 from Acanthamoeba polyphaga (Amoeba).